Consider the following 366-residue polypeptide: 3-dehydroquinate synthase (366 aa).

NAD(+) is bound by residues 107–111 (GVIGD), 131–132 (TS), K144, and K153. Zn(2+)-binding residues include E186, H251, and H268.

The protein belongs to the sugar phosphate cyclases superfamily. Dehydroquinate synthase family. Co(2+) is required as a cofactor. Requires Zn(2+) as cofactor. It depends on NAD(+) as a cofactor.

It localises to the cytoplasm. The enzyme catalyses 7-phospho-2-dehydro-3-deoxy-D-arabino-heptonate = 3-dehydroquinate + phosphate. The protein operates within metabolic intermediate biosynthesis; chorismate biosynthesis; chorismate from D-erythrose 4-phosphate and phosphoenolpyruvate: step 2/7. Its function is as follows. Catalyzes the conversion of 3-deoxy-D-arabino-heptulosonate 7-phosphate (DAHP) to dehydroquinate (DHQ). This chain is 3-dehydroquinate synthase, found in Rippkaea orientalis (strain PCC 8801 / RF-1) (Cyanothece sp. (strain PCC 8801)).